The primary structure comprises 396 residues: Na(+)/H(+) antiporter NhaA 1 (396 aa).

The next 12 membrane-spanning stretches (helical) occupy residues 9–29 (LHNEAASGVLIFLAAVAAMLI), 59–79 (LLLWINDGLMAVFFLLVGLEL), 95–115 (VLPVVGAVGGIVGPALIYVMF), 125–145 (GWAVPTATDIAFAMGVLALLG), 154–174 (LFLLTLAIIDDLVAIVIIAIF), 177–197 (SDLSVGSLTVAGGAIALLFLL), 200–220 (IGVKGIAPYVLVGMVLWVAVL), 223–243 (GVHATLAGVVLAMAIPIKGET), 260–280 (VVGLVILPLFAFANAGVSLAG), 281–301 (LGLNVLLEPVAMGIGLGLLLG), 332–352 (GVALLCGIGFTMSLFISSLAF), and 373–393 (ILSGSLVSGVLGYLVLRFSLA).

This sequence belongs to the NhaA Na(+)/H(+) (TC 2.A.33) antiporter family.

The protein resides in the cell inner membrane. It carries out the reaction Na(+)(in) + 2 H(+)(out) = Na(+)(out) + 2 H(+)(in). Na(+)/H(+) antiporter that extrudes sodium in exchange for external protons. The sequence is that of Na(+)/H(+) antiporter NhaA 1 from Magnetococcus marinus (strain ATCC BAA-1437 / JCM 17883 / MC-1).